A 759-amino-acid polypeptide reads, in one-letter code: Serine/threonine-protein kinase HRK1 (759 aa).

The segment at 1–32 is disordered; sequence MPNLLSRNPFHGHHNDHHHDRENSSNNPPQLI. A Phosphoserine modification is found at Ser37. The interval 45 to 162 is disordered; sequence KQSNDSLRSE…PPPSKSTSTV (118 aa). Residues 59 to 97 show a composition bias toward low complexity; the sequence is SMKSTTTTTNYTTTNLNNNTHSHSNATSISTNNYNNNYE. Positions 113–122 are enriched in polar residues; sequence SPASPKQTHS. The 508-residue stretch at 215 to 722 folds into the Protein kinase domain; it reads GKLGKLLGSG…LDDIFNDEWF (508 aa). Residues 221 to 229 and Lys244 contribute to the ATP site; that span reads LGSGAGGSV. Residue Asp340 is the Proton acceptor of the active site. Ser382 and Ser472 each carry phosphoserine. The span at 493–502 shows a compositional bias: polar residues; the sequence is PNTPASIQGK. Disordered regions lie at residues 493–578 and 614–682; these read PNTP…GRVD and AANA…KIIH. Thr495 is subject to Phosphothreonine. A Phosphoserine modification is found at Ser498. The segment covering 510-519 has biased composition (acidic residues); that stretch reads VEEETEENKE. Residues 520 to 547 show a composition bias toward basic and acidic residues; that stretch reads DDSNNDKESTPDNDKESTIDIKISKNEN. Over residues 614-646 the composition is skewed to low complexity; sequence AANANPDMVPQNNPQQQQQQQQQQQQQQQQQQQ. Over residues 663–672 the composition is skewed to polar residues; that stretch reads ASDNKSSQQH.

This sequence belongs to the protein kinase superfamily. Ser/Thr protein kinase family.

Its subcellular location is the cytoplasm. The catalysed reaction is L-seryl-[protein] + ATP = O-phospho-L-seryl-[protein] + ADP + H(+). It catalyses the reaction L-threonyl-[protein] + ATP = O-phospho-L-threonyl-[protein] + ADP + H(+). In terms of biological role, involved in regulating the activity of the plasma membrane proton pump PMA1. The sequence is that of Serine/threonine-protein kinase HRK1 (HRK1) from Saccharomyces cerevisiae (strain ATCC 204508 / S288c) (Baker's yeast).